The following is a 692-amino-acid chain: MAQSSPQLDIQVLNDLQQRFPEIPRDVVSQCMLQNNSNLDACYRALTQESCKYLYMDYHNLDETRMNSNLLHINLGIHPSSTYHTGDGAQVNGRPLVHSSSDGHIDPQRSPGKLLCLVPEPQSAPAVVAQNYNQFFLNDQNRNSPTPPPQPVQQPGVGTSAMQASLPTYMHVPRYSANPITVTVSPSGHNVPRALQIVPQVQNNPYGTPIYIRHPSQNSPGRQTQQNTAWPPSPQAVLPHYNPCPPYPQSFQPTQYSPKQPQIPQSAFRSPPTSQCTSPYSSPQHQVQTNQLSHQTSHVFLPPSPSTVSPHLYQQAPPPYPKQSSLGYLPYGPGLNKGPMNKIEITVESQQRPGPTLNRSPSPINNQSAQRSQQHPVYVSNARSGSPSRGIPTQPKASYSGSPLFITYSQPPTTTGSPTPSSRVVMSPSNPTVFKITVGRAPTENLLNIVDQEQHPSTPEPIQPISLLPVSGGDKGIHKYHRSSSSGSDDYAYTQALLLHQRARMERLAKELKHEKEELERLKAEVNGMEHDLMQRRLRRVSCTTAIPTPEEMTRLRGLNRQLQINVDCTQKEIDLLQSRGMAKLDVKAMSNFYDNLSPGPAVPPNTCKKESSETTSGERKARRISVTSKIKSDPPDLQAPSSLDIGPWQRASPRPGRDEDFEGSPWNCNSCTFLNHPALNRCEQCEMPRFT.

Residues 8 to 51 form the CUE domain; it reads LDIQVLNDLQQRFPEIPRDVVSQCMLQNNSNLDACYRALTQESC. 3 disordered regions span residues 138–159, 206–333, and 349–427; these read NDQNRNSPTPPPQPVQQPGVGT, YGTP…PYGP, and SQQR…VVMS. Polar residues-rich tracts occupy residues 215–230, 249–298, and 349–387; these read PSQNSPGRQTQQNTAW, QSFQ…QTSH, and SQQRPGPTLNRSPSPINNQSAQRSQQHPVYVSNARSGSP. Residues 409 to 422 are compositionally biased toward low complexity; that stretch reads SQPPTTTGSPTPSS. Positions 496-580 form a coiled coil; sequence ALLLHQRARM…QKEIDLLQSR (85 aa). Residues 598–662 are disordered; the sequence is SPGPAVPPNT…SPRPGRDEDF (65 aa). Residues 608–620 are compositionally biased toward basic and acidic residues; the sequence is CKKESSETTSGER. The RanBP2-type zinc-finger motif lies at 662–692; that stretch reads FEGSPWNCNSCTFLNHPALNRCEQCEMPRFT.

Functionally, may play a role in signaling pathway. This is Mitogen-activated protein kinase kinase kinase 7-interacting protein 3 homolog (map3k7ip3) from Xenopus laevis (African clawed frog).